A 96-amino-acid polypeptide reads, in one-letter code: Large ribosomal subunit protein bL28 (96 aa).

Positions 1-22 are disordered; sequence MSRRCELTGKGPMTGNNVSHAN.

This sequence belongs to the bacterial ribosomal protein bL28 family.

The protein is Large ribosomal subunit protein bL28 of Ruegeria sp. (strain TM1040) (Silicibacter sp.).